Consider the following 73-residue polypeptide: Conotoxin CnIIIF (73 aa).

An N-terminal signal peptide occupies residues 1 to 19 (MSKLGVLLTICLLLFPLTA). Positions 20–51 (LPMDGDQSVDRPAERMQDDISSGQHPLFNQKR) are excised as a propeptide. 3 cysteine pairs are disulfide-bonded: Cys-53/Cys-72, Cys-54/Cys-70, and Cys-60/Cys-73.

This sequence belongs to the conotoxin M superfamily. In terms of tissue distribution, expressed by the venom duct.

The protein resides in the secreted. Shows a paralytic effect in fish. In Conus consors (Singed cone), this protein is Conotoxin CnIIIF.